A 699-amino-acid chain; its full sequence is tRNA 5-methylaminomethyl-2-thiouridine biosynthesis bifunctional protein MnmC (699 aa).

The tract at residues 1–260 (MTAKPQKSCQ…ERKLLRQQAD (260 aa)) is tRNA (mnm(5)s(2)U34)-methyltransferase. The interval 282–699 (VGGGLASANL…LRKLLKGKAL (418 aa)) is FAD-dependent cmnm(5)s(2)U34 oxidoreductase.

In the N-terminal section; belongs to the methyltransferase superfamily. tRNA (mnm(5)s(2)U34)-methyltransferase family. The protein in the C-terminal section; belongs to the DAO family. The cofactor is FAD.

It localises to the cytoplasm. The catalysed reaction is 5-aminomethyl-2-thiouridine(34) in tRNA + S-adenosyl-L-methionine = 5-methylaminomethyl-2-thiouridine(34) in tRNA + S-adenosyl-L-homocysteine + H(+). Catalyzes the last two steps in the biosynthesis of 5-methylaminomethyl-2-thiouridine (mnm(5)s(2)U) at the wobble position (U34) in tRNA. Catalyzes the FAD-dependent demodification of cmnm(5)s(2)U34 to nm(5)s(2)U34, followed by the transfer of a methyl group from S-adenosyl-L-methionine to nm(5)s(2)U34, to form mnm(5)s(2)U34. This chain is tRNA 5-methylaminomethyl-2-thiouridine biosynthesis bifunctional protein MnmC, found in Shewanella sp. (strain MR-4).